The chain runs to 549 residues: MAKFVFITGGVVSSIGKGIVAASLGRLLKSRGYNVSILKLDPYLNVDPGTMSPFQHGEVFVTEDGAETDLDLGHYERFTDTAMSRLNSVTTGSIYQSVINKERRGAYNGGTVQVIPHITGEIRERIHRVAANSGADVVITEIGGTVGDIESLPFLEAIREFRGDVGRQDLAYIHVTLLPFIGTSGELKTKPTQHSVKELRSIGIQPDVLVCRSDREISEDLKRKIGGFCGVPNRAVIPSLDADTIYAVPLTLEEGGLCREVLDVLQLTDHESDMTAWSQLVHNLRNPGPSVKVALVGKYVQLNDAYLSVVEALRHACIAQDASLDLHWVCAEQIETEGADALLRGMDAVVVPGGFGNRGVDGKIAAIRWAREQRVPFLGLCLGMQTAVIEWARNQAGLPEATSEELDPGTPHPVIHLLPEQQDVVDLGGTMRLGVYPCRIAPDTLADRLYGEQVVYERHRHRFEFNNAYRSLFLEAGYVVSGTSPDGRLVELIELKGHPFFTACQYHPEFLSRPGRPHPLFRGLIEAAQQRLPDSPAQAIRNQGEVTTP.

The amidoligase domain stretch occupies residues 1–267 (MAKFVFITGG…CREVLDVLQL (267 aa)). S13 contacts CTP. S13 is a UTP binding site. ATP-binding positions include 14–19 (SIGKGI) and D71. Residues D71 and E141 each coordinate Mg(2+). CTP is bound by residues 148–150 (DIE), 188–193 (KTKPTQ), and K224. Residues 188 to 193 (KTKPTQ) and K224 each bind UTP. The Glutamine amidotransferase type-1 domain maps to 292–534 (KVALVGKYVQ…IEAAQQRLPD (243 aa)). G354 lines the L-glutamine pocket. Catalysis depends on C381, which acts as the Nucleophile; for glutamine hydrolysis. Residues 382–385 (LGMQ), E405, and R462 each bind L-glutamine. Active-site residues include H507 and E509.

The protein belongs to the CTP synthase family. As to quaternary structure, homotetramer.

The catalysed reaction is UTP + L-glutamine + ATP + H2O = CTP + L-glutamate + ADP + phosphate + 2 H(+). It catalyses the reaction L-glutamine + H2O = L-glutamate + NH4(+). It carries out the reaction UTP + NH4(+) + ATP = CTP + ADP + phosphate + 2 H(+). It participates in pyrimidine metabolism; CTP biosynthesis via de novo pathway; CTP from UDP: step 2/2. Its activity is regulated as follows. Allosterically activated by GTP, when glutamine is the substrate; GTP has no effect on the reaction when ammonia is the substrate. The allosteric effector GTP functions by stabilizing the protein conformation that binds the tetrahedral intermediate(s) formed during glutamine hydrolysis. Inhibited by the product CTP, via allosteric rather than competitive inhibition. In terms of biological role, catalyzes the ATP-dependent amination of UTP to CTP with either L-glutamine or ammonia as the source of nitrogen. Regulates intracellular CTP levels through interactions with the four ribonucleotide triphosphates. The protein is CTP synthase of Synechococcus sp. (strain CC9902).